A 298-amino-acid chain; its full sequence is DNA repair protein RecO (298 aa).

The protein belongs to the RecO family.

Functionally, involved in DNA repair and RecF pathway recombination. This chain is DNA repair protein RecO, found in Cupriavidus metallidurans (strain ATCC 43123 / DSM 2839 / NBRC 102507 / CH34) (Ralstonia metallidurans).